Consider the following 614-residue polypeptide: Acetylcholinesterase (614 aa).

The N-terminal stretch at 1 to 31 is a signal peptide; that stretch reads MRPPQCLLHTPSLASPLLLLLLWLLGGGVGA. Cysteines 100 and 127 form a disulfide. Trp-117 is a binding site for galanthamine. Trp-117 provides a ligand contact to huperzine A. Gly-153 is a huprine W binding site. Tyr-164 provides a ligand contact to huperzine A. 233–234 contacts galanthamine; the sequence is ES. Ser-234 provides a ligand contact to huprine W. Ser-234 serves as the catalytic Acyl-ester intermediate. Cysteines 288 and 303 form a disulfide. Asn-296 carries an N-linked (GlcNAc...) asparagine glycan. Catalysis depends on Glu-365, which acts as the Charge relay system. Tyr-368 contacts galanthamine. Residue Tyr-368 coordinates huperzine A. N-linked (GlcNAc...) asparagine glycosylation is present at Asn-381. The cysteines at positions 440 and 560 are disulfide-linked. Positions 470 and 478 each coordinate huprine W. Catalysis depends on His-478, which acts as the Charge relay system. An N-linked (GlcNAc...) asparagine glycan is attached at Asn-495. A lipid anchor (GPI-anchor amidated glycine) is attached at Phe-588.

The protein belongs to the type-B carboxylesterase/lipase family. In terms of assembly, interacts with PRIMA1. The interaction with PRIMA1 is required to anchor it to the basal lamina of cells and organize into tetramers. Isoform H generates GPI-anchored dimers; disulfide linked. Isoform T generates multiple structures, ranging from monomers and dimers to collagen-tailed and hydrophobic-tailed forms, in which catalytic tetramers are associated with anchoring proteins that attach them to the basal lamina or to cell membranes. In the collagen-tailed forms, isoform T subunits are associated with a specific collagen, COLQ, which triggers the formation of isoform T tetramers, from monomers and dimers. Isoform R may be monomeric. In terms of tissue distribution, isoform H is highly expressed in erythrocytes.

The protein localises to the synapse. The protein resides in the secreted. It localises to the cell membrane. Its subcellular location is the nucleus. The enzyme catalyses acetylcholine + H2O = choline + acetate + H(+). Its function is as follows. Hydrolyzes rapidly the acetylcholine neurotransmitter released into the synaptic cleft allowing to terminate the signal transduction at the neuromuscular junction. Role in neuronal apoptosis. This Homo sapiens (Human) protein is Acetylcholinesterase.